We begin with the raw amino-acid sequence, 163 residues long: Putative NOL1/NOP2/Sun domain family member 5B (163 aa).

Cys-93 acts as the Nucleophile in catalysis.

Belongs to the class I-like SAM-binding methyltransferase superfamily. RsmB/NOP family. Ubiquitous.

The polypeptide is Putative NOL1/NOP2/Sun domain family member 5B (NSUN5P1) (Homo sapiens (Human)).